The chain runs to 538 residues: Cytochrome P450 monooxygenase astC (538 aa).

The helical transmembrane segment at 18 to 38 threads the bilayer; it reads ALMLPALVGCALLIYRAFFAI. Cysteine 481 lines the heme pocket.

The protein belongs to the cytochrome P450 family. The cofactor is heme.

It localises to the membrane. It functions in the pathway secondary metabolite biosynthesis; terpenoid biosynthesis. Functionally, cytochrome P450 monooxygenase; part of the gene cluster that mediates the biosynthesis of the sesquiterpenoid aspterric acid (AA), an inhibitor of dihydroxy-acid dehydratase (DHAD) effective as an herbicide. AstC catalyzes the third and last step within the pathway and converts the alpha-epoxy carboxylate intermediate produced by the cytochrome P450 monooxygenase astC from (-)daucane into the tricyclic aspterric acid. The protein is Cytochrome P450 monooxygenase astC of Aspergillus terreus (strain NIH 2624 / FGSC A1156).